The following is a 1144-amino-acid chain: Nitric oxide synthase, inducible (1144 aa).

A DINNN-motif; mediates interaction with SPSB1, SPSB2 and SPSB4 motif is present at residues 23-27; the sequence is DINNN. The tract at residues 37–59 is disordered; that stretch reads SPTIQDDPKSHQNGSPQLLTGTA. Residues 47–59 show a composition bias toward polar residues; sequence HQNGSPQLLTGTA. Positions 104 and 109 each coordinate Zn(2+). Serine 112 contacts (6R)-L-erythro-5,6,7,8-tetrahydrobiopterin. Cysteine 194 serves as a coordination point for heme b. 4 residues coordinate L-arginine: glutamine 257, tryptophan 366, tyrosine 367, and glutamate 371. (6R)-L-erythro-5,6,7,8-tetrahydrobiopterin contacts are provided by arginine 375, isoleucine 456, tryptophan 457, and phenylalanine 470. Tyrosine 485 is a binding site for heme b. The segment at 509-529 is calmodulin-binding; that stretch reads FRVLVKVVFFASMLMRKVMAS. A Flavodoxin-like domain is found at 533–671; sequence ATVLFATETG…AFRSWAVQTF (139 aa). FMN is bound by residues threonine 539, glutamate 540, threonine 541, lysine 543, and serine 544. At tyrosine 569 the chain carries Phosphotyrosine. 6 residues coordinate FMN: serine 585, threonine 586, serine 622, cysteine 629, glutamate 655, and glutamine 659. Residues 724-964 enclose the FAD-binding FR-type domain; it reads KNVFTMRLKS…VRSVSGFQLP (241 aa). NADP(+) is bound at residue arginine 744. Residues histidine 766, arginine 900, tyrosine 902, serine 903, threonine 918, and alanine 920 each coordinate FAD. Residue threonine 923 coordinates NADP(+). FAD is bound by residues tyrosine 924, valine 937, cysteine 938, and serine 939. Positions 978, 1011, 1040, 1041, 1047, 1049, 1051, and 1084 each coordinate NADP(+).

The protein belongs to the NOS family. Homodimer. Interacts with NHERF1. Interacts with GAPDH. Interacts with S100A8 and S100A9 to form the iNOS-S100A8/9 transnitrosylase complex. Interacts with SPSB1, SPSB2 and SPSB4. Interacts with ELOC and CUL5 in the presence of SPSB1 or SPSB2 or SPSB4. Forms a complex with ASL, ASS1 and HSP90AA1; the complex regulates cell-autonomous L-arginine synthesis and citrulline recycling while channeling extracellular L-arginine to nitric oxide synthesis pathway. Heme b serves as cofactor. It depends on FAD as a cofactor. Requires FMN as cofactor. The cofactor is (6R)-L-erythro-5,6,7,8-tetrahydrobiopterin. In terms of processing, polyubiquitinated; mediated by SPSB1, SPSB2 and SPSB4, leading to proteasomal degradation. As to expression, macrophages.

Its subcellular location is the cytoplasm. The protein resides in the cytosol. The enzyme catalyses 2 L-arginine + 3 NADPH + 4 O2 + H(+) = 2 L-citrulline + 2 nitric oxide + 3 NADP(+) + 4 H2O. Not stimulated by calcium/calmodulin. Aspirin inhibits expression and function of this enzyme and effects may be exerted at the level of translational/post-translational modification and directly on the catalytic activity. Its function is as follows. Produces nitric oxide (NO) which is a messenger molecule with diverse functions throughout the body. In macrophages, NO mediates tumoricidal and bactericidal actions. Also has nitrosylase activity and mediates cysteine S-nitrosylation of cytoplasmic target proteins such PTGS2/COX2. As component of the iNOS-S100A8/9 transnitrosylase complex involved in the selective inflammatory stimulus-dependent S-nitrosylation of GAPDH implicated in regulation of the GAIT complex activity and probably multiple targets including ANXA5, EZR, MSN and VIM. Involved in inflammation, enhances the synthesis of pro-inflammatory mediators such as IL6 and IL8. This is Nitric oxide synthase, inducible (Nos2) from Mus musculus (Mouse).